Reading from the N-terminus, the 263-residue chain is MEYLKRLALLISVIILTIFIMGCDSQSDTAENPKEGSKEAQIKKSFSKTLDMYPIKNLEDFYDKEGYRDGEFKKDDKGTWLIRSEIVKQPKGKVMKTRGMQLYINRNTETAKGFFVLKEISENNNRVNKDKEEKYEVKMVGNKIIPTEQINDEKIKKEIENFKFFVQYGNFKNFEKYNNGEFSYNPEAPIYSAKYQLHNDDYNVRQLRKRYDISTKETPKLLLKGGGDLKNSSVGQNDIEFTFVERKGENIYFNDSVEFIPSK.

A signal peptide spans 1-22; it reads MEYLKRLALLISVIILTIFIMG. C23 is lipidated: N-palmitoyl cysteine. A lipid anchor (S-diacylglycerol cysteine) is attached at C23.

The protein belongs to the staphylococcal tandem lipoprotein family.

The protein resides in the cell membrane. This is an uncharacterized protein from Staphylococcus aureus (strain COL).